A 546-amino-acid chain; its full sequence is Protein FAM124A (546 aa).

Disordered regions lie at residues 1–37 (MDPKAGGGGEEDDCVDSGAETGGSDYSHLSSTSSELS), 286–360 (FPKP…FQRS), and 488–546 (SSSS…EFYI). Over residues 24-36 (SDYSHLSSTSSEL) the composition is skewed to low complexity. Positions 286-302 (FPKPGRVHHASEKKRHS) are enriched in basic residues. 2 stretches are compositionally biased toward polar residues: residues 304–324 (PLPSTAVPSHTPGSSQQSPLN) and 347–360 (ANSTPNPPWSFQRS). The segment covering 488-511 (SSSSATARAAPPAPSTSTLTDSSP) has biased composition (low complexity).

Belongs to the FAM124 family.

This is Protein FAM124A (FAM124A) from Homo sapiens (Human).